A 147-amino-acid polypeptide reads, in one-letter code: Large ribosomal subunit protein bL9 (147 aa).

It belongs to the bacterial ribosomal protein bL9 family.

Functionally, binds to the 23S rRNA. The chain is Large ribosomal subunit protein bL9 from Bacteroides fragilis (strain YCH46).